The primary structure comprises 183 residues: Adenine phosphoribosyltransferase (183 aa).

Belongs to the purine/pyrimidine phosphoribosyltransferase family. In terms of assembly, homodimer.

It is found in the cytoplasm. It carries out the reaction AMP + diphosphate = 5-phospho-alpha-D-ribose 1-diphosphate + adenine. It participates in purine metabolism; AMP biosynthesis via salvage pathway; AMP from adenine: step 1/1. In terms of biological role, catalyzes a salvage reaction resulting in the formation of AMP, that is energically less costly than de novo synthesis. This chain is Adenine phosphoribosyltransferase, found in Escherichia coli (strain K12 / MC4100 / BW2952).